We begin with the raw amino-acid sequence, 208 residues long: N-(5'-phosphoribosyl)anthranilate isomerase (208 aa).

The protein belongs to the TrpF family.

The catalysed reaction is N-(5-phospho-beta-D-ribosyl)anthranilate = 1-(2-carboxyphenylamino)-1-deoxy-D-ribulose 5-phosphate. Its pathway is amino-acid biosynthesis; L-tryptophan biosynthesis; L-tryptophan from chorismate: step 3/5. This chain is N-(5'-phosphoribosyl)anthranilate isomerase, found in Methanothrix thermoacetophila (strain DSM 6194 / JCM 14653 / NBRC 101360 / PT) (Methanosaeta thermophila).